The primary structure comprises 133 residues: Nucleoid-associated protein Mb3743c (133 aa).

Residues 98–133 (GAMRPPAPPAAPPGAPGMPGMPGMPGAPGAPPVPGI) are disordered. The span at 102–113 (PPAPPAAPPGAP) shows a compositional bias: pro residues.

Belongs to the YbaB/EbfC family. Homodimer.

It localises to the cytoplasm. Its subcellular location is the nucleoid. Functionally, binds to DNA and alters its conformation. May be involved in regulation of gene expression, nucleoid organization and DNA protection. This chain is Nucleoid-associated protein Mb3743c, found in Mycobacterium bovis (strain ATCC BAA-935 / AF2122/97).